The chain runs to 764 residues: uncharacterized protein (764 aa).

Over 1-646 (MKEENGFAGF…LTKLYTFPFT (646 aa)) the chain is Lumenal. Residues 22 to 173 (LNDTAPTKSQ…SAITAPSRKV (152 aa)) are disordered. Asparagine 23 carries N-linked (GlcNAc...) asparagine glycosylation. Polar residues-rich tracts occupy residues 25–41 (TAPT…NNEG) and 61–82 (SEAS…QSPS). Serine 80 carries the post-translational modification Phosphoserine. Residues 98–113 (ENQENEADEAENEETS) are compositionally biased toward acidic residues. N-linked (GlcNAc...) asparagine glycosylation occurs at asparagine 118. Residues 118-145 (NHTENTEEIAEESRPLERTHSGSNHHEA) are compositionally biased toward basic and acidic residues. A compositionally biased stretch (polar residues) spans 158–173 (NTLSQGSAITAPSRKV). The GRAM domain occupies 197 to 264 (RDFHRIFKVL…TEIVSVEKKS (68 aa)). Asparagine 240 and asparagine 330 each carry an N-linked (GlcNAc...) asparagine glycan. Positions 320 to 406 (ASGNHHSGSS…DGNSVKKMNE (87 aa)) are disordered. Residues 321 to 330 (SGNHHSGSSN) show a composition bias toward low complexity. Polar residues predominate over residues 331-340 (QSINADSSAG). Acidic residues predominate over residues 352–371 (ANDESSEDDDEDNNTDEANE). Residues asparagine 364 and asparagine 376 are each glycosylated (N-linked (GlcNAc...) asparagine). The span at 389 to 399 (HSDNVVLSDGN) shows a compositional bias: polar residues. The 167-residue stretch at 432 to 598 (LAHVLCSDVV…AFENYKVSPK (167 aa)) folds into the VASt domain. Residues asparagine 442 and asparagine 554 are each glycosylated (N-linked (GlcNAc...) asparagine). The segment covering 598–613 (KGRRKKITKHTKKKNK) has biased composition (basic residues). The segment at 598–626 (KGRRKKITKHTKKKNKHASETSVAPEKVD) is disordered. An N-linked (GlcNAc...) asparagine glycan is attached at asparagine 627. The chain crosses the membrane as a helical span at residues 647–667 (IITWLMHPTHLLLVVMFSMLV). Topologically, residues 668–764 (LQWWYMQQIL…LRKLEASGYI (97 aa)) are cytoplasmic.

It belongs to the YSP2 family.

It is found in the membrane. This is an uncharacterized protein from Schizosaccharomyces pombe (strain 972 / ATCC 24843) (Fission yeast).